Here is a 315-residue protein sequence, read N- to C-terminus: Homoserine kinase (315 aa).

Residue 97 to 107 coordinates ATP; it reads PPARGLGSSAT.

It belongs to the GHMP kinase family. Homoserine kinase subfamily.

It localises to the cytoplasm. The catalysed reaction is L-homoserine + ATP = O-phospho-L-homoserine + ADP + H(+). It participates in amino-acid biosynthesis; L-threonine biosynthesis; L-threonine from L-aspartate: step 4/5. Catalyzes the ATP-dependent phosphorylation of L-homoserine to L-homoserine phosphate. This is Homoserine kinase from Synechococcus sp. (strain CC9902).